The following is a 424-amino-acid chain: L-glutamine:2-deoxy-scyllo-inosose aminotransferase (424 aa).

Position 202 is an N6-(pyridoxal phosphate)lysine (K202).

Belongs to the DegT/DnrJ/EryC1 family. L-glutamine:2-deoxy-scyllo-inosose/scyllo-inosose aminotransferase subfamily. Pyridoxal 5'-phosphate is required as a cofactor.

It catalyses the reaction 2-deoxy-L-scyllo-inosose + L-glutamine = 2-deoxy-scyllo-inosamine + 2-oxoglutaramate. The catalysed reaction is 3-amino-2,3-dideoxy-scyllo-inosose + L-glutamine = 2-deoxystreptamine + 2-oxoglutaramate. Its pathway is metabolic intermediate biosynthesis; 2-deoxystreptamine biosynthesis; 2-deoxystreptamine from D-glucose 6-phosphate: step 2/4. It functions in the pathway antibiotic biosynthesis; tobramycin biosynthesis. Catalyzes the PLP-dependent transamination of 2-deoxy-scyllo-inosose (2-DOI) to form 2-deoxy-scyllo-inosamine (2-DOIA) using L-glutamine as the amino donor. Also catalyzes the transamination of 3-amino-2,3-dideoxy-scyllo-inosose (keto-2-DOIA) into 2-deoxystreptamine (2-DOS). The polypeptide is L-glutamine:2-deoxy-scyllo-inosose aminotransferase (tbmB) (Streptoalloteichus tenebrarius (strain ATCC 17920 / DSM 40477 / JCM 4838 / CBS 697.72 / NBRC 16177 / NCIMB 11028 / NRRL B-12390 / A12253. 1 / ISP 5477) (Streptomyces tenebrarius)).